Consider the following 439-residue polypeptide: Histidinol dehydrogenase (439 aa).

Residues Tyr-129, Gln-193, and Asn-222 each coordinate NAD(+). Residues Thr-245, Gln-267, and His-270 each coordinate substrate. Zn(2+) contacts are provided by Gln-267 and His-270. Catalysis depends on proton acceptor residues Glu-336 and His-337. The substrate site is built by His-337, Asp-370, Glu-424, and His-429. Position 370 (Asp-370) interacts with Zn(2+). A Zn(2+)-binding site is contributed by His-429.

It belongs to the histidinol dehydrogenase family. Requires Zn(2+) as cofactor.

It carries out the reaction L-histidinol + 2 NAD(+) + H2O = L-histidine + 2 NADH + 3 H(+). The protein operates within amino-acid biosynthesis; L-histidine biosynthesis; L-histidine from 5-phospho-alpha-D-ribose 1-diphosphate: step 9/9. Catalyzes the sequential NAD-dependent oxidations of L-histidinol to L-histidinaldehyde and then to L-histidine. The chain is Histidinol dehydrogenase from Cutibacterium acnes (strain DSM 16379 / KPA171202) (Propionibacterium acnes).